The chain runs to 443 residues: Ribulose bisphosphate carboxylase large chain (443 aa).

An N6,N6,N6-trimethyllysine modification is found at K3. Residues N112 and T162 each contribute to the substrate site. K164 functions as the Proton acceptor in the catalytic mechanism. K166 lines the substrate pocket. 3 residues coordinate Mg(2+): K190, D192, and E193. The residue at position 190 (K190) is an N6-carboxylysine. Residue H283 is the Proton acceptor of the active site. Substrate contacts are provided by R284, H316, and S368.

It belongs to the RuBisCO large chain family. Type I subfamily. In terms of assembly, heterohexadecamer of 8 large chains and 8 small chains; disulfide-linked. The disulfide link is formed within the large subunit homodimers. Mg(2+) is required as a cofactor. In terms of processing, the disulfide bond which can form in the large chain dimeric partners within the hexadecamer appears to be associated with oxidative stress and protein turnover.

It localises to the plastid. The protein resides in the chloroplast. The catalysed reaction is 2 (2R)-3-phosphoglycerate + 2 H(+) = D-ribulose 1,5-bisphosphate + CO2 + H2O. It catalyses the reaction D-ribulose 1,5-bisphosphate + O2 = 2-phosphoglycolate + (2R)-3-phosphoglycerate + 2 H(+). Functionally, ruBisCO catalyzes two reactions: the carboxylation of D-ribulose 1,5-bisphosphate, the primary event in carbon dioxide fixation, as well as the oxidative fragmentation of the pentose substrate in the photorespiration process. Both reactions occur simultaneously and in competition at the same active site. This is Ribulose bisphosphate carboxylase large chain from Iris germanica (Bearded iris).